The following is a 915-amino-acid chain: Pentatricopeptide repeat-containing protein At5g65560 (915 aa).

20 PPR repeats span residues 182 to 216, 217 to 251, 252 to 286, 287 to 321, 322 to 356, 357 to 391, 392 to 426, 427 to 460, 461 to 495, 496 to 530, 531 to 565, 566 to 600, 601 to 635, 636 to 670, 671 to 705, 724 to 758, 759 to 794, 795 to 829, 830 to 864, and 865 to 899; these read IIGC…KVCP, NIYT…GLDP, DFFT…GCRR, NEVA…ECFP, TVRT…GIKP, NIHT…GLMP, NVIT…KLSP, NTRT…KVLP, DVVT…GLVP, DQWT…GVNP, NVVM…NCLP, NSLT…GLQP, TVST…GTKP, DAHT…GVSP, DLFT…GCEP, KQKG…SVTP, NAKS…GISP, SELV…GHLP, QLES…GYYE, and DELA…GCKF.

This sequence belongs to the PPR family. P subfamily.

The sequence is that of Pentatricopeptide repeat-containing protein At5g65560 from Arabidopsis thaliana (Mouse-ear cress).